Here is a 392-residue protein sequence, read N- to C-terminus: Multidrug resistance protein MdtL (392 aa).

12 consecutive transmembrane segments (helical) span residues 4–24, 38–58, 69–89, 95–115, 131–151, 158–178, 209–229, 246–266, 270–290, 294–314, 331–351, and 357–377; these read FLLC…MYLV, AQLH…MLFA, PVAI…AQVH, LIGR…AFAI, LLNG…HLIM, SLFY…VFIL, LLIT…SPVL, ALMA…LSLF, TLML…SLAT, VTLI…GVAM, VLGI…AIIG, and MLIG…LVVT.

It belongs to the major facilitator superfamily. DHA1 family. MdtL (TC 2.A.1.2.22) subfamily.

It localises to the cell inner membrane. The sequence is that of Multidrug resistance protein MdtL from Klebsiella pneumoniae subsp. pneumoniae (strain ATCC 700721 / MGH 78578).